A 453-amino-acid polypeptide reads, in one-letter code: UDP-N-acetylmuramoylalanine--D-glutamate ligase (453 aa).

119–125 contributes to the ATP binding site; the sequence is GTNGKTT.

Belongs to the MurCDEF family.

Its subcellular location is the cytoplasm. It catalyses the reaction UDP-N-acetyl-alpha-D-muramoyl-L-alanine + D-glutamate + ATP = UDP-N-acetyl-alpha-D-muramoyl-L-alanyl-D-glutamate + ADP + phosphate + H(+). The protein operates within cell wall biogenesis; peptidoglycan biosynthesis. In terms of biological role, cell wall formation. Catalyzes the addition of glutamate to the nucleotide precursor UDP-N-acetylmuramoyl-L-alanine (UMA). This chain is UDP-N-acetylmuramoylalanine--D-glutamate ligase, found in Syntrophus aciditrophicus (strain SB).